A 314-amino-acid chain; its full sequence is DegV domain-containing protein XCC3382 (314 aa).

Positions isoleucine 3–alanine 307 constitute a DegV domain. Hexadecanoate is bound by residues threonine 63 and serine 96.

May bind long-chain fatty acids, such as palmitate, and may play a role in lipid transport or fatty acid metabolism. This is DegV domain-containing protein XCC3382 from Xanthomonas campestris pv. campestris (strain ATCC 33913 / DSM 3586 / NCPPB 528 / LMG 568 / P 25).